Here is a 154-residue protein sequence, read N- to C-terminus: UPF0178 protein SSP2038 (154 aa).

Belongs to the UPF0178 family.

This Staphylococcus saprophyticus subsp. saprophyticus (strain ATCC 15305 / DSM 20229 / NCIMB 8711 / NCTC 7292 / S-41) protein is UPF0178 protein SSP2038.